The following is a 455-amino-acid chain: Probable glycine dehydrogenase (decarboxylating) subunit 1 (455 aa).

Belongs to the GcvP family. N-terminal subunit subfamily. As to quaternary structure, the glycine cleavage system is composed of four proteins: P, T, L and H. In this organism, the P 'protein' is a heterodimer of two subunits.

It catalyses the reaction N(6)-[(R)-lipoyl]-L-lysyl-[glycine-cleavage complex H protein] + glycine + H(+) = N(6)-[(R)-S(8)-aminomethyldihydrolipoyl]-L-lysyl-[glycine-cleavage complex H protein] + CO2. In terms of biological role, the glycine cleavage system catalyzes the degradation of glycine. The P protein binds the alpha-amino group of glycine through its pyridoxal phosphate cofactor; CO(2) is released and the remaining methylamine moiety is then transferred to the lipoamide cofactor of the H protein. The polypeptide is Probable glycine dehydrogenase (decarboxylating) subunit 1 (Francisella tularensis subsp. tularensis (strain FSC 198)).